The sequence spans 611 residues: Putative clathrin assembly protein At4g02650 (611 aa).

One can recognise an ENTH domain in the interval G26–K162. Disordered regions lie at residues G158–T184 and T337–L406. The segment covering M386 to Q401 has biased composition (basic and acidic residues).

The protein localises to the membrane. It localises to the clathrin-coated pit. The protein resides in the golgi apparatus. It is found in the cytoplasmic vesicle. Its subcellular location is the clathrin-coated vesicle. This Arabidopsis thaliana (Mouse-ear cress) protein is Putative clathrin assembly protein At4g02650.